The chain runs to 244 residues: 3-oxoacyl-[acyl-carrier-protein] reductase FabG (244 aa).

NADP(+) is bound by residues G12–R15, T37, N59–V60, and N86. A substrate-binding site is contributed by S138. The Proton acceptor role is filled by Y151. NADP(+) is bound by residues Y151–K155 and I184.

Belongs to the short-chain dehydrogenases/reductases (SDR) family. As to quaternary structure, homotetramer.

It catalyses the reaction a (3R)-hydroxyacyl-[ACP] + NADP(+) = a 3-oxoacyl-[ACP] + NADPH + H(+). Its pathway is lipid metabolism; fatty acid biosynthesis. Catalyzes the NADPH-dependent reduction of beta-ketoacyl-ACP substrates to beta-hydroxyacyl-ACP products, the first reductive step in the elongation cycle of fatty acid biosynthesis. This chain is 3-oxoacyl-[acyl-carrier-protein] reductase FabG (fabG), found in Vibrio cholerae serotype O1 (strain ATCC 39315 / El Tor Inaba N16961).